The primary structure comprises 78 residues: MRDRILAAVCDVLYIDEADLIDGDETDLRDLGLDSVRFVLLMKQLGVNRQSELPSRLAANPSIAGWLRELEAVCTEFG.

Residues 1 to 78 (MRDRILAAVC…ELEAVCTEFG (78 aa)) enclose the Carrier domain. At serine 35 the chain carries O-(pantetheine 4'-phosphoryl)serine.

It belongs to the acyl carrier protein (ACP) family. Pantetheine 4'-phosphate is required as a cofactor.

It functions in the pathway lipid metabolism; fatty acid metabolism. Its function is as follows. Acyl-carrier protein (ACP) involved in the biosynthesis of a unique class of isonitrile lipopeptides (INLPs) that seem to play a role in metal acquisition. Is the dedicated ACP for the loading of activated acyl groups catalyzed by FadD10. The chain is Acyl carrier protein BQ2027_MB0103 from Mycobacterium bovis (strain ATCC BAA-935 / AF2122/97).